The sequence spans 342 residues: Fructose-1,6-bisphosphatase class 1 (342 aa).

The Mg(2+) site is built by glutamate 97, aspartate 119, leucine 121, and aspartate 122. Substrate-binding positions include 122–125 (DGSS), asparagine 215, tyrosine 247, and lysine 280. Glutamate 286 lines the Mg(2+) pocket.

Belongs to the FBPase class 1 family. In terms of assembly, homotetramer. Requires Mg(2+) as cofactor.

The protein localises to the cytoplasm. It carries out the reaction beta-D-fructose 1,6-bisphosphate + H2O = beta-D-fructose 6-phosphate + phosphate. Its pathway is carbohydrate biosynthesis; gluconeogenesis. The protein is Fructose-1,6-bisphosphatase class 1 of Leptospira interrogans serogroup Icterohaemorrhagiae serovar copenhageni (strain Fiocruz L1-130).